The primary structure comprises 300 residues: Pantoate--beta-alanine ligase (300 aa).

43 to 50 contacts ATP; sequence MGYLHSGH. Histidine 50 acts as the Proton donor in catalysis. Glutamine 74 lines the (R)-pantoate pocket. Glutamine 74 contacts beta-alanine. 162-165 provides a ligand contact to ATP; that stretch reads GQKD. Glutamine 168 serves as a coordination point for (R)-pantoate. ATP contacts are provided by residues isoleucine 191 and 199 to 202; that span reads KSSR.

The protein belongs to the pantothenate synthetase family. In terms of assembly, homodimer.

Its subcellular location is the cytoplasm. The enzyme catalyses (R)-pantoate + beta-alanine + ATP = (R)-pantothenate + AMP + diphosphate + H(+). It functions in the pathway cofactor biosynthesis; (R)-pantothenate biosynthesis; (R)-pantothenate from (R)-pantoate and beta-alanine: step 1/1. In terms of biological role, catalyzes the condensation of pantoate with beta-alanine in an ATP-dependent reaction via a pantoyl-adenylate intermediate. The protein is Pantoate--beta-alanine ligase (panC) of Dictyostelium discoideum (Social amoeba).